The chain runs to 259 residues: 3-dehydroquinate dehydratase (259 aa).

3-dehydroquinate is bound by residues Glu-50 to Arg-52 and Arg-86. The active-site Proton donor/acceptor is the His-147. Lys-174 acts as the Schiff-base intermediate with substrate in catalysis. 3 residues coordinate 3-dehydroquinate: Arg-216, Ser-235, and Gln-239.

The protein belongs to the type-I 3-dehydroquinase family. In terms of assembly, homodimer.

The catalysed reaction is 3-dehydroquinate = 3-dehydroshikimate + H2O. Its pathway is metabolic intermediate biosynthesis; chorismate biosynthesis; chorismate from D-erythrose 4-phosphate and phosphoenolpyruvate: step 3/7. Functionally, involved in the third step of the chorismate pathway, which leads to the biosynthesis of aromatic amino acids. Catalyzes the cis-dehydration of 3-dehydroquinate (DHQ) and introduces the first double bond of the aromatic ring to yield 3-dehydroshikimate. This is 3-dehydroquinate dehydratase from Geobacillus sp. (strain WCH70).